We begin with the raw amino-acid sequence, 235 residues long: Sugar fermentation stimulation protein homolog (235 aa).

It belongs to the SfsA family.

In Serratia proteamaculans (strain 568), this protein is Sugar fermentation stimulation protein homolog.